The primary structure comprises 79 residues: Sec-independent protein translocase protein TatA (79 aa).

The helical transmembrane segment at 1 to 21 (MGGISIWQLLIIALIVVLLFG) threads the bilayer. The segment at 43 to 79 (MSSEEDKKALEDTEAAKTAQTTQQATEKKPESNKEQA) is disordered. Positions 46–57 (EEDKKALEDTEA) are enriched in basic and acidic residues. Residues 58–67 (AKTAQTTQQA) are compositionally biased toward low complexity. Positions 68 to 79 (TEKKPESNKEQA) are enriched in basic and acidic residues.

This sequence belongs to the TatA/E family. In terms of assembly, the Tat system comprises two distinct complexes: a TatABC complex, containing multiple copies of TatA, TatB and TatC subunits, and a separate TatA complex, containing only TatA subunits. Substrates initially bind to the TatABC complex, which probably triggers association of the separate TatA complex to form the active translocon.

The protein localises to the cell inner membrane. Its function is as follows. Part of the twin-arginine translocation (Tat) system that transports large folded proteins containing a characteristic twin-arginine motif in their signal peptide across membranes. TatA could form the protein-conducting channel of the Tat system. This chain is Sec-independent protein translocase protein TatA, found in Shewanella putrefaciens (strain CN-32 / ATCC BAA-453).